A 66-amino-acid chain; its full sequence is DNA gyrase inhibitor YacG (66 aa).

4 residues coordinate Zn(2+): cysteine 9, cysteine 12, cysteine 28, and cysteine 32.

Belongs to the DNA gyrase inhibitor YacG family. In terms of assembly, interacts with GyrB. It depends on Zn(2+) as a cofactor.

Functionally, inhibits all the catalytic activities of DNA gyrase by preventing its interaction with DNA. Acts by binding directly to the C-terminal domain of GyrB, which probably disrupts DNA binding by the gyrase. The polypeptide is DNA gyrase inhibitor YacG (Pseudomonas aeruginosa (strain LESB58)).